A 288-amino-acid polypeptide reads, in one-letter code: 4-diphosphocytidyl-2-C-methyl-D-erythritol kinase (288 aa).

Residue lysine 8 is part of the active site. 92–102 (PVAAGMAGGST) contacts ATP. Aspartate 134 is a catalytic residue.

This sequence belongs to the GHMP kinase family. IspE subfamily.

It carries out the reaction 4-CDP-2-C-methyl-D-erythritol + ATP = 4-CDP-2-C-methyl-D-erythritol 2-phosphate + ADP + H(+). Its pathway is isoprenoid biosynthesis; isopentenyl diphosphate biosynthesis via DXP pathway; isopentenyl diphosphate from 1-deoxy-D-xylulose 5-phosphate: step 3/6. Its function is as follows. Catalyzes the phosphorylation of the position 2 hydroxy group of 4-diphosphocytidyl-2C-methyl-D-erythritol. This is 4-diphosphocytidyl-2-C-methyl-D-erythritol kinase from Clostridium perfringens (strain SM101 / Type A).